The following is a 728-amino-acid chain: 1,4-alpha-glucan branching enzyme GlgB (728 aa).

The active-site Nucleophile is Asp-405. The Proton donor role is filled by Glu-458. The disordered stretch occupies residues 686-712 (YHGSNAGNAGAVQSDEHESHGRPHSLS).

It belongs to the glycosyl hydrolase 13 family. GlgB subfamily. Monomer.

It catalyses the reaction Transfers a segment of a (1-&gt;4)-alpha-D-glucan chain to a primary hydroxy group in a similar glucan chain.. It functions in the pathway glycan biosynthesis; glycogen biosynthesis. Functionally, catalyzes the formation of the alpha-1,6-glucosidic linkages in glycogen by scission of a 1,4-alpha-linked oligosaccharide from growing alpha-1,4-glucan chains and the subsequent attachment of the oligosaccharide to the alpha-1,6 position. The sequence is that of 1,4-alpha-glucan branching enzyme GlgB from Enterobacter sp. (strain 638).